A 138-amino-acid polypeptide reads, in one-letter code: Putative membrane protein insertion efficiency factor (138 aa).

Residues 71 to 138 (YDPVPGTPEA…GTPSHTRGEN (68 aa)) form a disordered region. Positions 81-113 (RQWRELHPETARSKNEPIHDLTDDNPRDHEPAL) are enriched in basic and acidic residues. Over residues 123–138 (PGSTHTGTPSHTRGEN) the composition is skewed to polar residues.

The protein belongs to the UPF0161 family.

Its subcellular location is the cell membrane. In terms of biological role, could be involved in insertion of integral membrane proteins into the membrane. The polypeptide is Putative membrane protein insertion efficiency factor (Cutibacterium acnes (strain DSM 16379 / KPA171202) (Propionibacterium acnes)).